Consider the following 634-residue polypeptide: MINKFKFYLIFLKLILILVNCQNSLNDYGFGIVDESSICTSYIGDELCKNRLSNSESIYTTPGGGGGGGIDKLSQISTLPILQKGFQSLTFSQGICKDLNFIEFGMCDSALSPCIETTPKITPGYNISLPQRVCKSVCERMLIGCPQLAIQIDCSISFLFPKIGTFYNLTKYGYTANGGMYMVPCIDTEINYEKNKVQENVGFLESCPYPLLLKNSTDPQYAEKRGYTYLTPTNCVLPCPIPNYTKRQMDSVINMSKAMSSISFVLSLFNVITFGLLIKKKSKYNVCIALMAIGSSFIYLSDIINYGVGIEKQLCPEPGRVATQRVDSLCGFTGSIFHIGITLCVLWSMTMGIVLYSKIKQFKLPNFRYFLIGNLSFTVVTLIILASAKKFQGGNGFLECWMRDRWYVVAIFWIPCGIALLLGVLSICGVIFEIYKISKNVSLKDSKVVIRELKPFVLVVTVSASLIYLFVFYFDSESKYDFYKKGVEDYILCLLTSENPLDECYTVGPNFNSYFMFYFLIRFFGILFFGIFGTSEIARNAWTESFFVTKIKSKISITTVSSSTRGGGGDTSGIKSSSSSSNSGVCNNNNSTRKNYGDDFNSKNLSQPDNTIITNNNNNDNNNKMEIELDSIDI.

The N-terminal stretch at 1–21 is a signal peptide; the sequence is MINKFKFYLIFLKLILILVNC. The Extracellular segment spans residues 22–257; the sequence is QNSLNDYGFG…QMDSVINMSK (236 aa). Residues 34-178 form the FZ domain; it reads DESSICTSYI…LTKYGYTANG (145 aa). N-linked (GlcNAc...) asparagine glycosylation is found at Asn126, Asn168, Asn215, Asn243, and Asn254. A helical transmembrane segment spans residues 258 to 278; it reads AMSSISFVLSLFNVITFGLLI. Residues 279-287 are Cytoplasmic-facing; the sequence is KKKSKYNVC. A helical transmembrane segment spans residues 288 to 308; that stretch reads IALMAIGSSFIYLSDIINYGV. Over 309-335 the chain is Extracellular; it reads GIEKQLCPEPGRVATQRVDSLCGFTGS. The chain crosses the membrane as a helical span at residues 336–356; it reads IFHIGITLCVLWSMTMGIVLY. The Cytoplasmic segment spans residues 357-368; that stretch reads SKIKQFKLPNFR. Residues 369–389 form a helical membrane-spanning segment; that stretch reads YFLIGNLSFTVVTLIILASAK. At 390 to 410 the chain is on the extracellular side; sequence KFQGGNGFLECWMRDRWYVVA. Residues 411 to 431 form a helical membrane-spanning segment; it reads IFWIPCGIALLLGVLSICGVI. Over 432-454 the chain is Cytoplasmic; it reads FEIYKISKNVSLKDSKVVIRELK. Residues 455–475 form a helical membrane-spanning segment; that stretch reads PFVLVVTVSASLIYLFVFYFD. Over 476–513 the chain is Extracellular; it reads SESKYDFYKKGVEDYILCLLTSENPLDECYTVGPNFNS. Residues 514 to 534 form a helical membrane-spanning segment; the sequence is YFMFYFLIRFFGILFFGIFGT. The Cytoplasmic portion of the chain corresponds to 535 to 634; that stretch reads SEIARNAWTE…MEIELDSIDI (100 aa). A disordered region spans residues 560 to 624; it reads VSSSTRGGGG…NNNNNDNNNK (65 aa). 2 stretches are compositionally biased toward low complexity: residues 572–592 and 609–622; these read SGIK…NNST and DNTI…NDNN.

This sequence belongs to the G-protein coupled receptor Fz/Smo family.

Its subcellular location is the membrane. This Dictyostelium discoideum (Social amoeba) protein is Frizzled and smoothened-like protein D (fslD).